Consider the following 244-residue polypeptide: Ribonuclease 3 (244 aa).

In terms of domain architecture, RNase III spans 7-134 (FEEVEKTLNI…IIAAIYIDSG (128 aa)). Residue Glu-47 participates in Mg(2+) binding. Residue Asp-51 is part of the active site. Residues Asn-120 and Glu-123 each contribute to the Mg(2+) site. Glu-123 is a catalytic residue. Positions 161–230 (DYKTNLQEIV…AQDALKKLKS (70 aa)) constitute a DRBM domain.

This sequence belongs to the ribonuclease III family. In terms of assembly, homodimer. Mg(2+) serves as cofactor.

The protein resides in the cytoplasm. The catalysed reaction is Endonucleolytic cleavage to 5'-phosphomonoester.. In terms of biological role, digests double-stranded RNA. Involved in the processing of primary rRNA transcript to yield the immediate precursors to the large and small rRNAs (23S and 16S). Processes some mRNAs, and tRNAs when they are encoded in the rRNA operon. Processes pre-crRNA and tracrRNA of type II CRISPR loci if present in the organism. This Clostridium kluyveri (strain NBRC 12016) protein is Ribonuclease 3.